A 411-amino-acid chain; its full sequence is S-adenosylmethionine synthase (411 aa).

H15 lines the ATP pocket. D17 contributes to the Mg(2+) binding site. E43 contacts K(+). E56 and Q100 together coordinate L-methionine. Residues 100–110 (QSPDIAQGVNE) are flexible loop. ATP contacts are provided by residues 171–173 (DGK), 248–249 (KF), D257, 263–264 (RK), A280, and K284. D257 is an L-methionine binding site. Residue K288 coordinates L-methionine.

Belongs to the AdoMet synthase family. As to quaternary structure, homotetramer; dimer of dimers. The cofactor is Mg(2+). Requires K(+) as cofactor.

It is found in the cytoplasm. The enzyme catalyses L-methionine + ATP + H2O = S-adenosyl-L-methionine + phosphate + diphosphate. It functions in the pathway amino-acid biosynthesis; S-adenosyl-L-methionine biosynthesis; S-adenosyl-L-methionine from L-methionine: step 1/1. In terms of biological role, catalyzes the formation of S-adenosylmethionine (AdoMet) from methionine and ATP. The overall synthetic reaction is composed of two sequential steps, AdoMet formation and the subsequent tripolyphosphate hydrolysis which occurs prior to release of AdoMet from the enzyme. This is S-adenosylmethionine synthase from Synechococcus sp. (strain CC9605).